The sequence spans 365 residues: MKKYTKYLPLLLIIPFLAACGSSSPKKSKRTKTRVDYNTKDTNGLDILTGQFSHNIDDIWGSNELLVASKKDYVKYTDKFYTRSHISFEDGQITIETLGDQNHLRNSIIHTLLMGSDPKGIDLFASGDAPISSNPFLAGQVNDQFGRDINNIAIANDFATYLIQNKLQTRRLQNGRTVTYVAIKMVAGHIEVRARQYLPLVRKMAKRYGIEPSLILGIMEVESAFNPYAVSYANAIGLMQVVPRTAGRDIFARKGFDGQPDRAYLYNPSQNIDSGTLYLAILRDEYLEGITNPTAKRYAMISAYNSGAGAVLKVFDYDKYDAIDRINELSPDAVYRILTTAHPSSQARNYLKKVSKAREKYLHIR.

An N-terminal signal peptide occupies residues 1-19 (MKKYTKYLPLLLIIPFLAA). The N-palmitoyl cysteine moiety is linked to residue Cys20. Cys20 is lipidated: S-diacylglycerol cysteine.

It belongs to the transglycosylase Slt family.

The protein resides in the cell outer membrane. The catalysed reaction is Exolytic cleavage of the (1-&gt;4)-beta-glycosidic linkage between N-acetylmuramic acid (MurNAc) and N-acetylglucosamine (GlcNAc) residues in peptidoglycan, from either the reducing or the non-reducing ends of the peptidoglycan chains, with concomitant formation of a 1,6-anhydrobond in the MurNAc residue.. Murein-degrading enzyme. May play a role in recycling of muropeptides during cell elongation and/or cell division. This chain is Membrane-bound lytic murein transglycosylase C, found in Actinobacillus pleuropneumoniae serotype 5b (strain L20).